We begin with the raw amino-acid sequence, 793 residues long: ClpA homolog protein (793 aa).

The tract at residues 1-24 (MRPRSNAGSSPPDPEEQEHAQVPS) is disordered. The 147-residue stretch at 22–168 (VPSFSSTLEQ…NFIAHGVAKD (147 aa)) folds into the Clp R domain. Repeat regions lie at residues 25–88 (FSST…IDDD) and 103–168 (PTAA…VAKD). The tract at residues 169-194 (PSYGESRPVQGADEPQETPKAEAGEA) is disordered. Basic and acidic residues predominate over residues 185–194 (ETPKAEAGEA). The segment at 199 to 447 (LSKYCVDLNI…AQHLVSDSKR (249 aa)) is i. Residues 244 to 251 (GDPGVGKT) and 525 to 532 (GPTGVGKT) contribute to the ATP site. The II stretch occupies residues 451–639 (LGTKEIEAVV…ILIMTSNVGA (189 aa)).

It belongs to the ClpA/ClpB family.

The sequence is that of ClpA homolog protein from Fuscovulum blasticum (Rhodobacter blasticus).